The chain runs to 98 residues: Large ribosomal subunit protein bL25 (98 aa).

Positions 1–23 are disordered; the sequence is MANFVLNAQARAEDKQGKGASRR.

The protein belongs to the bacterial ribosomal protein bL25 family. Part of the 50S ribosomal subunit; part of the 5S rRNA/L5/L18/L25 subcomplex. Contacts the 5S rRNA. Binds to the 5S rRNA independently of L5 and L18.

In terms of biological role, this is one of the proteins that binds to the 5S RNA in the ribosome where it forms part of the central protuberance. The polypeptide is Large ribosomal subunit protein bL25 (Acinetobacter baumannii (strain AB307-0294)).